A 203-amino-acid polypeptide reads, in one-letter code: Mitotic spindle assembly checkpoint protein MAD2A (203 aa).

In terms of domain architecture, HORMA spans 14–196 (KGSTEIVTEF…TTIHKVESMV (183 aa)). Positions 194–203 (SMVAYKISND) are required for assuming the closed conformation and for interaction with cdc20.

The protein belongs to the MAD2 family. Interacts with cdc20.

Its subcellular location is the nucleus. The protein localises to the chromosome. It localises to the centromere. It is found in the kinetochore. The protein resides in the cytoplasm. Component of the spindle-assembly checkpoint that prevents the onset of anaphase until all chromosomes are properly aligned at the metaphase plate. Required for the execution of the mitotic checkpoint which monitors the process of kinetochore-spindle attachment and inhibits the activity of the anaphase promoting complex until all chromosomes are aligned at the metaphase plate. The polypeptide is Mitotic spindle assembly checkpoint protein MAD2A (mad2l1-1) (Dictyostelium discoideum (Social amoeba)).